The primary structure comprises 120 residues: Cell cycle protein GpsB (120 aa).

Residues 32–68 (LDDIIKDYETYAALVKELREENRRLKEELAAKPVEKA) are a coiled coil. The interval 63-88 (KPVEKAPVQPTQPVQSTQATQSTVES) is disordered. The segment covering 68-86 (APVQPTQPVQSTQATQSTV) has biased composition (low complexity).

The protein belongs to the GpsB family. As to quaternary structure, forms polymers through the coiled coil domains. Interacts with PBP1, MreC and EzrA.

The protein resides in the cytoplasm. In terms of biological role, divisome component that associates with the complex late in its assembly, after the Z-ring is formed, and is dependent on DivIC and PBP2B for its recruitment to the divisome. Together with EzrA, is a key component of the system that regulates PBP1 localization during cell cycle progression. Its main role could be the removal of PBP1 from the cell pole after pole maturation is completed. Also contributes to the recruitment of PBP1 to the division complex. Not essential for septum formation. This Streptococcus sanguinis (strain SK36) protein is Cell cycle protein GpsB.